Consider the following 220-residue polypeptide: Large ribosomal subunit protein uL16z (220 aa).

Belongs to the universal ribosomal protein uL16 family. Component of the small ribosomal subunit. Mature ribosomes consist of a small (40S) and a large (60S) subunit. The 40S subunit contains about 33 different proteins and 1 molecule of RNA (18S). The 60S subunit contains about 49 different proteins and 3 molecules of RNA (25S, 5.8S and 5S). Interacts with NIK1. Interacts with LIMYB. In terms of processing, phosphorylated by NIK1 and NIK2 in vitro. Ubiquitous, with the highest expression in flowers. Expressed in seedlings, leaves, roots, stems and flowers. Expressed in young leaves, mostly in dividing cells and in the hydathodes, in the root tips and lateral root primordia, in pistils, anthers, and pollen grains, and in developing seeds.

The protein localises to the cytoplasm. The protein resides in the nucleus. In terms of biological role, ribosomal protein involved in translational regulation. Contribute to general translation under UV-B stress. Involved in the NIK1-mediated defense response to geminivirus infection. Acts coordinately with LIMYB as a transcriptional repressor. The chain is Large ribosomal subunit protein uL16z from Arabidopsis thaliana (Mouse-ear cress).